The following is a 2481-amino-acid chain: Tetratricopeptide repeat protein 28 (2481 aa).

An N-acetylmethionine modification is found at M1. The span at 1–14 shows a compositional bias: pro residues; that stretch reads MEQSPPPAPEPTQG. The tract at residues 1 to 48 is disordered; the sequence is MEQSPPPAPEPTQGPTPARSRRRREPESPPASAPIPLFGADTIGQRSP. S28 carries the phosphoserine modification. 28 TPR repeats span residues 58–91, 93–125, 126–159, 196–229, 234–267, 274–307, 314–347, 354–387, 394–427, 434–467, 474–507, 514–547, 554–587, 594–627, 634–667, 674–707, 714–747, 754–787, 794–827, 834–867, 877–910, 917–950, 957–990, 997–1030, 1037–1070, 1077–1110, 1117–1150, and 1169–1202; these read FVEK…DPQN, ILYS…NPKW, PKAY…DPKS, FVVV…GTCS, GSVF…AKTL, CRAH…AMKL, SSAL…AKQS, AREL…AKDL, ARAY…AQEL, MRAY…AEDL, GRAS…AQEL, GRAY…SMEV, ASTH…AREL, ARAL…APDL, GKVC…AKDL, AKAY…AQSL, FRAL…AHQV, ASAY…YQEL, CRAH…GQKL, AQVY…LQQL, GRAY…AQSL, AKAY…AHEL, AQAY…ARDM, SDAA…AEET, GRAY…AAQM, TVSY…AEQL, AKIR…FETI, and TSSY…AFAD. Position 1590 is a phosphoserine (S1590). Disordered stretches follow at residues 2004 to 2055, 2075 to 2161, and 2176 to 2339; these read FVSK…DEEE, NTCF…DPQE, and AVER…PADA. Polar residues-rich tracts occupy residues 2029 to 2043 and 2096 to 2122; these read AYLQ…QLPP and SVSS…NSPF. Residue S2104 is modified to Phosphoserine. The segment covering 2130 to 2146 has biased composition (low complexity); that stretch reads SSDTGESDQSSTETDST. A compositionally biased stretch (basic and acidic residues) spans 2149–2159; sequence SQEESNPKLDP. Residues 2183 to 2214 show a composition bias toward polar residues; the sequence is SGGQVSKSNNPEDGVQAPSSTAVFRASETSAF. Phosphoserine occurs at positions 2224 and 2251. Positions 2238 to 2282 are enriched in polar residues; that stretch reads RSSSLPKVSSGYSSPTTSEMSIKDSPSQHSGRPSPGCDSQTSQLD. A compositionally biased stretch (low complexity) spans 2307–2339; it reads SPSSGHQSPAGSAPSPALSYSSAGSARSSPADA. 2 positions are modified to phosphoserine: S2393 and S2398. Residues 2420 to 2467 are disordered; that stretch reads QHDGAPPKAPPNGHWRTETTSLGSLPLPAGPPATAPARPLRLPSGNGY.

In terms of assembly, interacts with AURKB. In terms of tissue distribution, widely expressed in fetal tissues. In adult tissues, expressed in testis and ovary and, at much lower levels, in kidney and pancreas.

The protein resides in the cytoplasm. The protein localises to the cytoskeleton. It localises to the microtubule organizing center. Its subcellular location is the centrosome. It is found in the spindle. The protein resides in the spindle pole. The protein localises to the midbody. Functionally, during mitosis, may be involved in the condensation of spindle midzone microtubules, leading to the formation of midbody. This chain is Tetratricopeptide repeat protein 28 (TTC28), found in Homo sapiens (Human).